Consider the following 131-residue polypeptide: Actin-associated protein FAM107A (131 aa).

Residues V57–K77 are a coiled coil. The Nuclear localization signal motif lies at R61 to E71.

As to quaternary structure, interacts with ACTB. Interacts with COMMD1; this interaction stabilizes COMMD1 in the nucleus. Interacts with MAP1A. Interacts with PRDX1. Interacts with F-actin.

The protein localises to the nucleus. It localises to the cytoplasm. Its subcellular location is the cytoskeleton. It is found in the stress fiber. The protein resides in the cell junction. The protein localises to the focal adhesion. It localises to the cell projection. Its subcellular location is the ruffle membrane. It is found in the synapse. Its function is as follows. Stress-inducible actin-binding protein that plays a role in synaptic and cognitive functions by modulating actin filamentous (F-actin) dynamics. Mediates polymerization of globular actin to F-actin. Also binds to, stabilizes and bundles F-actin. Involved in synaptic function by regulating neurite outgrowth in an actin-dependent manner and for the acquisition of hippocampus-dependent cognitive function, such as learning and long-term memory. Plays a role in the actin and microtubule cytoskeleton organization; negatively regulates focal adhesion (FA) assembly promoting malignant glial cell migration in an actin-, microtubule- and MAP1A-dependent manner. Also involved in neuroblastoma G1/S phase cell cycle progression and cell proliferation inhibition by stimulating ubiquitination of NF-kappa-B subunit RELA and NF-kappa-B degradation in a COMMD1- and actin-dependent manner. May play a role in tumor development. The protein is Actin-associated protein FAM107A of Rattus norvegicus (Rat).